We begin with the raw amino-acid sequence, 278 residues long: 4-diphosphocytidyl-2-C-methyl-D-erythritol kinase (278 aa).

Lysine 9 is a catalytic residue. 89 to 99 (PVASGIGGGSA) is an ATP binding site. Aspartate 128 is a catalytic residue.

This sequence belongs to the GHMP kinase family. IspE subfamily.

The enzyme catalyses 4-CDP-2-C-methyl-D-erythritol + ATP = 4-CDP-2-C-methyl-D-erythritol 2-phosphate + ADP + H(+). It functions in the pathway isoprenoid biosynthesis; isopentenyl diphosphate biosynthesis via DXP pathway; isopentenyl diphosphate from 1-deoxy-D-xylulose 5-phosphate: step 3/6. Catalyzes the phosphorylation of the position 2 hydroxy group of 4-diphosphocytidyl-2C-methyl-D-erythritol. This chain is 4-diphosphocytidyl-2-C-methyl-D-erythritol kinase, found in Cereibacter sphaeroides (strain ATCC 17025 / ATH 2.4.3) (Rhodobacter sphaeroides).